Consider the following 708-residue polypeptide: Leucine-rich repeat neuronal protein 3 (708 aa).

The first 22 residues, 1–22 (MKDMPLQIHVLLGLAITTLVQA), serve as a signal peptide directing secretion. The LRRNT domain occupies 23–69 (VDKKVDCPQLCTCEIRPWFTPTSIYMEASTVDCNDLGLLTFPARLPA). The Extracellular segment spans residues 23 to 628 (VDKKVDCPQL…KEYEKSNTTT (606 aa)). 12 LRR repeats span residues 70-91 (NTQILLLQTNDIAKIEYSTDFP), 93-114 (NLTGLDLSQNNLSSVTNINVKK), 117-138 (QLLSVYLEENKLTELPEKCLSE), 141-162 (NLQELYINHNLLSTISPGAFIG), 165-186 (NLLRLHLNSNRLQMINSKWFDA), 189-210 (NLEILMIGENPIIRIKDMNFKP), 213-234 (NLRSLVIAGINLTEIPDNALVG), 237-258 (NLESISFYDNRLIKVPHAALQK), 261-282 (NLKFLDLNKNPINRIRRGDFSN), 285-304 (HLKELGINNMPELISIDSLA), 310-332 (DLRKIEATNNPRLSYIHPNAFFR), and 335-358 (KLESLMLNSNALSALYHGTIESLP). 2 N-linked (GlcNAc...) asparagine glycosylation sites follow: asparagine 93 and asparagine 103. Asparagine 223 is a glycosylation site (N-linked (GlcNAc...) asparagine). An LRRCT domain is found at 368 to 421 (NPIRCDCVIRWINMNKTNIRFMEPDSLFCVDPPEFQGQNVRQVHFRDMMEICLP). Residue asparagine 382 is glycosylated (N-linked (GlcNAc...) asparagine). The Ig-like C2-type domain occupies 421–514 (PLIAPESFPS…DLKSVMIKVD (94 aa)). Cysteines 444 and 496 form a disulfide. Residues asparagine 522, asparagine 579, asparagine 608, and asparagine 625 are each glycosylated (N-linked (GlcNAc...) asparagine). Positions 523 to 617 (GSLNIKIRDI…NVTTKGLDPD (95 aa)) constitute a Fibronectin type-III domain. A helical transmembrane segment spans residues 629–649 (LMACLGGLLGIIGVICLISCL). The Cytoplasmic segment spans residues 650 to 708 (SPEMNCDGGHSYVRNYLQKPTFALGELYPPLINLWEAGKEKSTSLKVKATVIGLPTNMS).

It localises to the membrane. The protein is Leucine-rich repeat neuronal protein 3 (LRRN3) of Pongo abelii (Sumatran orangutan).